The primary structure comprises 76 residues: Defensin-like protein 155 (76 aa).

Positions 1 to 27 (MAKISCSYLLILMLALSVFSVVEKAKG) are cleaved as a signal peptide. 4 disulfides stabilise this stretch: cysteine 31–cysteine 76, cysteine 40–cysteine 59, cysteine 45–cysteine 70, and cysteine 49–cysteine 72.

The protein belongs to the DEFL family.

The protein localises to the secreted. The protein is Defensin-like protein 155 (LCR36) of Arabidopsis thaliana (Mouse-ear cress).